The following is a 269-amino-acid chain: Cytochrome c oxidase subunit 3 (269 aa).

7 helical membrane passes run 24-44 (LFTS…MHGF), 46-66 (GFQY…GLWF), 90-110 (GVGL…WAFF), 138-160 (PLLN…HSLI), 167-187 (ALYG…FQGV), 207-227 (FGTG…AVGL), and 247-267 (ILYW…VYYW).

It belongs to the cytochrome c oxidase subunit 3 family. As to quaternary structure, component of the cytochrome c oxidase (complex IV, CIV), a multisubunit enzyme composed of a catalytic core of 3 subunits and several supernumerary subunits. The complex exists as a monomer or a dimer and forms supercomplexes (SCs) in the inner mitochondrial membrane with ubiquinol-cytochrome c oxidoreductase (cytochrome b-c1 complex, complex III, CIII).

It localises to the mitochondrion inner membrane. It catalyses the reaction 4 Fe(II)-[cytochrome c] + O2 + 8 H(+)(in) = 4 Fe(III)-[cytochrome c] + 2 H2O + 4 H(+)(out). Functionally, component of the cytochrome c oxidase, the last enzyme in the mitochondrial electron transport chain which drives oxidative phosphorylation. The respiratory chain contains 3 multisubunit complexes succinate dehydrogenase (complex II, CII), ubiquinol-cytochrome c oxidoreductase (cytochrome b-c1 complex, complex III, CIII) and cytochrome c oxidase (complex IV, CIV), that cooperate to transfer electrons derived from NADH and succinate to molecular oxygen, creating an electrochemical gradient over the inner membrane that drives transmembrane transport and the ATP synthase. Cytochrome c oxidase is the component of the respiratory chain that catalyzes the reduction of oxygen to water. Electrons originating from reduced cytochrome c in the intermembrane space (IMS) are transferred via the dinuclear copper A center (CU(A)) of subunit 2 and heme A of subunit 1 to the active site in subunit 1, a binuclear center (BNC) formed by heme A3 and copper B (CU(B)). The BNC reduces molecular oxygen to 2 water molecules using 4 electrons from cytochrome c in the IMS and 4 protons from the mitochondrial matrix. The polypeptide is Cytochrome c oxidase subunit 3 (cox3) (Emericella nidulans (Aspergillus nidulans)).